The following is a 495-amino-acid chain: Methyl viologen resistance protein SmvA (495 aa).

Transmembrane regions (helical) follow at residues 5–25, 44–64, 73–93, 96–116, 135–155, 158–178, 192–212, 220–240, 260–280, 299–319, 327–347, 357–377, 391–411, and 469–489; these read WLTL…ATVL, LWII…MGAL, LLML…FSHT, WLIA…PATL, VWAA…GILL, FYWG…MGLT, PLNL…VYSA, LSLW…GLFI, IILS…GFEL, VFML…GVLV, VATG…MTDF, LMAL…SAIM, IETM…GLLL, and VALS…WFSL.

Belongs to the major facilitator superfamily. TCR/Tet family.

Its subcellular location is the cell inner membrane. In terms of biological role, major efflux pump for acriflavine and other quaternary ammonium compounds (QACs). Also required for resistance to methyl viologen. This is Methyl viologen resistance protein SmvA (smvA) from Salmonella typhimurium (strain LT2 / SGSC1412 / ATCC 700720).